Here is a 202-residue protein sequence, read N- to C-terminus: NADH-quinone oxidoreductase subunit C (202 aa).

Belongs to the complex I 30 kDa subunit family. In terms of assembly, NDH-1 is composed of 14 different subunits. Subunits NuoB, C, D, E, F, and G constitute the peripheral sector of the complex.

The protein resides in the cell inner membrane. It catalyses the reaction a quinone + NADH + 5 H(+)(in) = a quinol + NAD(+) + 4 H(+)(out). Its function is as follows. NDH-1 shuttles electrons from NADH, via FMN and iron-sulfur (Fe-S) centers, to quinones in the respiratory chain. The immediate electron acceptor for the enzyme in this species is believed to be ubiquinone. Couples the redox reaction to proton translocation (for every two electrons transferred, four hydrogen ions are translocated across the cytoplasmic membrane), and thus conserves the redox energy in a proton gradient. This chain is NADH-quinone oxidoreductase subunit C, found in Paracidovorax citrulli (strain AAC00-1) (Acidovorax citrulli).